We begin with the raw amino-acid sequence, 336 residues long: CST complex subunit STN1 (336 aa).

The OB DNA-binding region spans 49-126 (VDILGTVVCV…EVVASIFYKV (78 aa)). Winged helix-turn-helix (wHTH) regions lie at residues 162–263 (QSQE…YVTD) and 264–336 (HDKE…YTAF).

This sequence belongs to the CTC1 family. As to quaternary structure, component of the CST complex.

Its subcellular location is the nucleus. It is found in the chromosome. The protein resides in the telomere. Functionally, component of the CST complex proposed to act as a specialized replication factor promoting DNA replication under conditions of replication stress or natural replication barriers such as the telomere duplex. The CST complex binds single-stranded DNA with high affinity in a sequence-independent manner, while isolated subunits bind DNA with low affinity by themselves. Initially the CST complex has been proposed to protect telomeres from DNA degradation. However, the CST complex has been shown to be involved in several aspects of telomere replication. This Aquarana catesbeiana (American bullfrog) protein is CST complex subunit STN1.